The chain runs to 550 residues: Aspartate--tRNA ligase (550 aa).

Position 162 (E162) interacts with L-aspartate. The interval 186 to 189 is aspartate; that stretch reads QIYK. An L-aspartate-binding site is contributed by R208. Residues 208–210 and Q217 contribute to the ATP site; that span reads RDE. Position 417 (H417) interacts with L-aspartate. An ATP-binding site is contributed by E451. R458 contacts L-aspartate. 499–502 contributes to the ATP binding site; sequence GIDR.

The protein belongs to the class-II aminoacyl-tRNA synthetase family. Type 1 subfamily. In terms of assembly, homodimer.

It localises to the cytoplasm. It carries out the reaction tRNA(Asp) + L-aspartate + ATP = L-aspartyl-tRNA(Asp) + AMP + diphosphate. In terms of biological role, catalyzes the attachment of L-aspartate to tRNA(Asp) in a two-step reaction: L-aspartate is first activated by ATP to form Asp-AMP and then transferred to the acceptor end of tRNA(Asp). The chain is Aspartate--tRNA ligase from Mycoplasma genitalium (strain ATCC 33530 / DSM 19775 / NCTC 10195 / G37) (Mycoplasmoides genitalium).